Consider the following 288-residue polypeptide: MNNLSFSELCCLFCCPPCPGKIASKLAFLPPDPTYTLICDESGSRWTLHLSERADWQYSSREKDAIECFMTRTSRGNRIACMFVRCCPSAKYTLLFSHGNAVDLGQMSSFYIGLGSRINCNIFSYDYSGYGSSSGKPSEKNLYADIDAAWIALRTRYGIRPEHVIIYGQSIGTVPSVDLAARYESAAVILHSPLTSGMRVAFPDTKKTYCFDAFPNIDKISKITSPVLIIHGTEDEVIDFSHGLALFERCQRPVEPLWVEGAGHNDVELYGQYLERLKQFVAQELVNL.

Active-site charge relay system residues include Ser-170, Asp-235, and His-264.

Belongs to the AB hydrolase superfamily. ABHD17 family. In terms of processing, palmitoylated on cysteine residues located in a cysteine cluster at the N-terminus which promotes membrane localization.

It localises to the cell membrane. Its subcellular location is the recycling endosome membrane. It is found in the cell projection. The protein localises to the dendritic spine. The protein resides in the postsynaptic density membrane. It carries out the reaction S-hexadecanoyl-L-cysteinyl-[protein] + H2O = L-cysteinyl-[protein] + hexadecanoate + H(+). Hydrolyzes fatty acids from S-acylated cysteine residues in proteins. Has depalmitoylating activity towards nras. The chain is Alpha/beta hydrolase domain-containing protein 17B from Xenopus laevis (African clawed frog).